Here is a 349-residue protein sequence, read N- to C-terminus: 2-oxoglutarate-Fe(II) type oxidoreductase hxnY (349 aa).

Residues 178-282 (GVATMRMLHY…RYSIPFFFSG (105 aa)) form the Fe2OG dioxygenase domain. Fe cation-binding residues include histidine 205, aspartate 207, and histidine 263. Residue arginine 273 coordinates 2-oxoglutarate.

The protein belongs to the iron/ascorbate-dependent oxidoreductase family. Fe(2+) serves as cofactor.

In terms of biological role, 2-oxoglutarate-Fe(II) type oxidoreductase, part of the hnx cluster involved in the purine degradation. The nicotinate hydroxylase hnxS accepts nicotinate as a substrate and catalyzes the first step of nicotinate catabolism. The major facilitator-type transporters hxnP and hxnZ are probably involved in the uptake of nicotinate-derived metabolites, and the oxidoreductases hxnT and hxnY in the further metabolism of 6-OH nicotinic acid. The chain is 2-oxoglutarate-Fe(II) type oxidoreductase hxnY from Emericella nidulans (strain FGSC A4 / ATCC 38163 / CBS 112.46 / NRRL 194 / M139) (Aspergillus nidulans).